The sequence spans 78 residues: Large ribosomal subunit protein bL28 (78 aa).

It belongs to the bacterial ribosomal protein bL28 family.

This Clavibacter michiganensis subsp. michiganensis (strain NCPPB 382) protein is Large ribosomal subunit protein bL28.